The primary structure comprises 140 residues: Ergosterol biosynthetic protein 28 homolog (140 aa).

Transmembrane regions (helical) follow at residues 4–24 (FLNVLRSWLVMVSIIAMGNTL), 52–72 (TFGIWTLLSSVIRCLCAIDIH), 79–99 (ITLWTFLLALGHFLSELFVFG), and 105–125 (VGVLAPLMVASFSILGMLVGL).

Belongs to the ERG28 family.

It localises to the endoplasmic reticulum membrane. This Mus musculus (Mouse) protein is Ergosterol biosynthetic protein 28 homolog.